We begin with the raw amino-acid sequence, 366 residues long: Transcription factor MYB28 (366 aa).

2 HTH myb-type domains span residues 9–61 (GEGL…TNYL) and 62–116 (KPEI…KKRL). 2 DNA-binding regions (H-T-H motif) span residues 37–61 (WRDI…TNYL) and 89–112 (WSVI…NTHL). The tract at residues 124–170 (VTHKPLASSSNPTVDENLNSPNASSSDKQYSRSSSMPFLSRPPPSSC) is disordered. Over residues 130–146 (ASSSNPTVDENLNSPNA) the composition is skewed to polar residues. Residues 147–158 (SSSDKQYSRSSS) are compositionally biased toward low complexity.

As to quaternary structure, can form complexes with MYC2, MYC3 or MYC4. In terms of tissue distribution, expressed in generative organs, mature leaves and trichomes.

The protein resides in the nucleus. Functionally, major regulator of short-chained aliphatic glucosinolates (GLSs) biosynthesis. Together with MYB29/HAG3 and MYB76/HAG2, promotes aliphatic glucosinolate biosynthesis but represses indolic glucosinolate biosynthesis. Prevents insect performance (e.g. lepidopteran insect Mamestra brassicae and Spodoptera exigua) by promoting glucosinolates. This chain is Transcription factor MYB28 (MYB28), found in Arabidopsis thaliana (Mouse-ear cress).